The following is a 419-amino-acid chain: UDP-N-acetylglucosamine 1-carboxyvinyltransferase (419 aa).

22 to 23 contributes to the phosphoenolpyruvate binding site; it reads KN. Residue Arg91 participates in UDP-N-acetyl-alpha-D-glucosamine binding. The active-site Proton donor is Cys115. A 2-(S-cysteinyl)pyruvic acid O-phosphothioketal modification is found at Cys115. UDP-N-acetyl-alpha-D-glucosamine is bound by residues 120 to 124, 160 to 163, Asp305, and Val327; these read RPVDL and KVSV.

This sequence belongs to the EPSP synthase family. MurA subfamily.

It localises to the cytoplasm. It catalyses the reaction phosphoenolpyruvate + UDP-N-acetyl-alpha-D-glucosamine = UDP-N-acetyl-3-O-(1-carboxyvinyl)-alpha-D-glucosamine + phosphate. The protein operates within cell wall biogenesis; peptidoglycan biosynthesis. Functionally, cell wall formation. Adds enolpyruvyl to UDP-N-acetylglucosamine. The protein is UDP-N-acetylglucosamine 1-carboxyvinyltransferase of Escherichia coli (strain K12 / MC4100 / BW2952).